A 332-amino-acid chain; its full sequence is T-cell surface glycoprotein CD1c3 (332 aa).

Residues 1-17 form the signal peptide; the sequence is MLFLQFLFLDVVLGGSI. The Extracellular portion of the chain corresponds to 18–300; the sequence is TKNVVQENIS…IILYWGHGLS (283 aa). Asn25, Asn38, Asn75, and Asn146 each carry an N-linked (GlcNAc...) asparagine glycan. 2 disulfides stabilise this stretch: Cys120–Cys184 and Cys224–Cys279. The region spanning 205 to 292 is the Ig-like domain; the sequence is PEVWLSSSPN…HSSLRDQDII (88 aa). Residues 301–321 traverse the membrane as a helical segment; it reads VILITFAVIVPLVLLIILVLL. At 322–332 the chain is on the cytoplasmic side; the sequence is CKKCCTYQGIP.

Heterodimer with B2M (beta-2-microglobulin).

Its subcellular location is the cell membrane. It localises to the endosome membrane. In terms of biological role, antigen-presenting protein that binds self and non-self lipid and glycolipid antigens and presents them to T-cell receptors on natural killer T-cells. The sequence is that of T-cell surface glycoprotein CD1c3 (CD1C3) from Cavia porcellus (Guinea pig).